A 297-amino-acid chain; its full sequence is tRNA pseudouridine synthase B (297 aa).

The Nucleophile role is filled by Asp44.

The protein belongs to the pseudouridine synthase TruB family. Type 1 subfamily.

It catalyses the reaction uridine(55) in tRNA = pseudouridine(55) in tRNA. Responsible for synthesis of pseudouridine from uracil-55 in the psi GC loop of transfer RNAs. This Corynebacterium efficiens (strain DSM 44549 / YS-314 / AJ 12310 / JCM 11189 / NBRC 100395) protein is tRNA pseudouridine synthase B.